The chain runs to 239 residues: 1-(5-phosphoribosyl)-5-[(5-phosphoribosylamino)methylideneamino] imidazole-4-carboxamide isomerase (239 aa).

Residue aspartate 8 is the Proton acceptor of the active site. The active-site Proton donor is aspartate 129.

The protein belongs to the HisA/HisF family.

It is found in the cytoplasm. It carries out the reaction 1-(5-phospho-beta-D-ribosyl)-5-[(5-phospho-beta-D-ribosylamino)methylideneamino]imidazole-4-carboxamide = 5-[(5-phospho-1-deoxy-D-ribulos-1-ylimino)methylamino]-1-(5-phospho-beta-D-ribosyl)imidazole-4-carboxamide. It participates in amino-acid biosynthesis; L-histidine biosynthesis; L-histidine from 5-phospho-alpha-D-ribose 1-diphosphate: step 4/9. The polypeptide is 1-(5-phosphoribosyl)-5-[(5-phosphoribosylamino)methylideneamino] imidazole-4-carboxamide isomerase (Bacillus mycoides (strain KBAB4) (Bacillus weihenstephanensis)).